The chain runs to 95 residues: Large ribosomal subunit protein bL25 (95 aa).

It belongs to the bacterial ribosomal protein bL25 family. In terms of assembly, part of the 50S ribosomal subunit; part of the 5S rRNA/L5/L18/L25 subcomplex. Contacts the 5S rRNA. Binds to the 5S rRNA independently of L5 and L18.

This is one of the proteins that binds to the 5S RNA in the ribosome where it forms part of the central protuberance. The chain is Large ribosomal subunit protein bL25 from Shewanella baltica (strain OS223).